An 813-amino-acid chain; its full sequence is Xaa-Pro dipeptidyl-peptidase (813 aa).

Active-site charge relay system residues include serine 375, aspartate 495, and histidine 526.

This sequence belongs to the peptidase S15 family. As to quaternary structure, homodimer.

Its subcellular location is the cytoplasm. The enzyme catalyses Hydrolyzes Xaa-Pro-|- bonds to release unblocked, N-terminal dipeptides from substrates including Ala-Pro-|-p-nitroanilide and (sequentially) Tyr-Pro-|-Phe-Pro-|-Gly-Pro-|-Ile.. Its function is as follows. Removes N-terminal dipeptides sequentially from polypeptides having unsubstituted N-termini provided that the penultimate residue is proline. In Lactiplantibacillus plantarum (strain ATCC BAA-793 / NCIMB 8826 / WCFS1) (Lactobacillus plantarum), this protein is Xaa-Pro dipeptidyl-peptidase.